Reading from the N-terminus, the 612-residue chain is Protein lin-61 (612 aa).

MBT repeat units lie at residues 143–249, 263–380, 381–501, and 508–607; these read YLWE…MDKI, NDMV…GYQL, NAKK…LVPP, and FRWD…LQPP.

Interacts preferentially with histone H3 that is dimethylated or trimethylated at 'Lys-9'.

Its subcellular location is the nucleus. The protein resides in the chromosome. Its function is as follows. Synthetic multivulva class B (synMuvB) protein required to repress the induction of vulval development by Ras signaling. Unlike other synMuv proteins it does not associate with the multiprotein DRM complex and the NuRD-like complex. Interaction with methylated histone H3 is essential for vulva development. It has a role in maintaining genome stability. The protein is Protein lin-61 (lin-61) of Caenorhabditis elegans.